Consider the following 344-residue polypeptide: Phenylalanine--tRNA ligase alpha subunit (344 aa).

Position 256 (glutamate 256) interacts with Mg(2+).

Belongs to the class-II aminoacyl-tRNA synthetase family. Phe-tRNA synthetase alpha subunit type 1 subfamily. As to quaternary structure, tetramer of two alpha and two beta subunits. Mg(2+) serves as cofactor.

The protein localises to the cytoplasm. The enzyme catalyses tRNA(Phe) + L-phenylalanine + ATP = L-phenylalanyl-tRNA(Phe) + AMP + diphosphate + H(+). This chain is Phenylalanine--tRNA ligase alpha subunit, found in Geobacillus kaustophilus (strain HTA426).